The primary structure comprises 80 residues: Metallothionein-like protein type 2 (80 aa).

The protein belongs to the metallothionein superfamily. Type 15 family.

Functionally, metallothioneins have a high content of cysteine residues that bind various heavy metals. The polypeptide is Metallothionein-like protein type 2 (Brassica campestris (Field mustard)).